Reading from the N-terminus, the 247-residue chain is 5'-nucleotidase SurE (247 aa).

4 residues coordinate a divalent metal cation: Asp8, Asp9, Ser39, and Asn91.

It belongs to the SurE nucleotidase family. A divalent metal cation is required as a cofactor.

Its subcellular location is the cytoplasm. The enzyme catalyses a ribonucleoside 5'-phosphate + H2O = a ribonucleoside + phosphate. In terms of biological role, nucleotidase that shows phosphatase activity on nucleoside 5'-monophosphates. This chain is 5'-nucleotidase SurE, found in Ruthia magnifica subsp. Calyptogena magnifica.